The following is a 590-amino-acid chain: MRTHYSSDINEKLQGQKVTVCGWVHRRRDHGGVIFLDIRDRTGLVQLVFNPDNDNFKVADSLRSEFVIKAEGVVNLRPEGQENKNISSGKVEIIGDSIEVINKSKTIPFQLDDFQSTGEDVKLKYRYIDLRRPEMQHKLITRSKAIRYVRNFLDNNGFLDIETPFLTKATPEGARDYLVPSRNFNGKFYALPQSPQLFKQLLMVSGFDRYYQIVKCFRDEDLRADRQPEFTQIDIEASFIDEAFIMSTMERMIAGLFKETIGVEFATPFQVMTFADAIDKYGSDKPDLRIPLEFVNIKEDMQNEEFKVFSGPANDPQSRVIALRISGGNDKLTRKMIDEYTKFVGIYGAKGLAYIKINSLSQGKEGLQSPIVKNISEETLFKVIEKTSAKEDDLLFFGAGKTKIVNDSMGALRAKIGEDLDLFNKDWAPLWVVDFPMFEKDDNRLYAMHHPFTAPKVSSVEDLVNTNPEELSSRAYDMVINGYEVGGGSIRIHKQDIQAKVFNLLGISDDEAREKFGFMLDALSYGTPIHGGIAFGVDRLIMLLTGTTNIRDVIAFPKTQTASCLMTEAPSTVSLEQLNELGIAVKKEER.

Glu172 contributes to the L-aspartate binding site. Residues 196-199 form an aspartate region; that stretch reads QLFK. Arg218 is an L-aspartate binding site. Residues 218–220 and Gln227 contribute to the ATP site; that span reads RDE. His449 contributes to the L-aspartate binding site. Glu484 contributes to the ATP binding site. L-aspartate is bound at residue Arg491. 536-539 contributes to the ATP binding site; that stretch reads GVDR.

Belongs to the class-II aminoacyl-tRNA synthetase family. Type 1 subfamily. In terms of assembly, homodimer.

It localises to the cytoplasm. It carries out the reaction tRNA(Asx) + L-aspartate + ATP = L-aspartyl-tRNA(Asx) + AMP + diphosphate. Its function is as follows. Aspartyl-tRNA synthetase with relaxed tRNA specificity since it is able to aspartylate not only its cognate tRNA(Asp) but also tRNA(Asn). Reaction proceeds in two steps: L-aspartate is first activated by ATP to form Asp-AMP and then transferred to the acceptor end of tRNA(Asp/Asn). This is Aspartate--tRNA(Asp/Asn) ligase from Francisella tularensis subsp. holarctica (strain FTNF002-00 / FTA).